Here is a 302-residue protein sequence, read N- to C-terminus: Bifunctional protein FolD (302 aa).

NADP(+)-binding positions include 168–170 (GRS), Thr197, and Val238.

It belongs to the tetrahydrofolate dehydrogenase/cyclohydrolase family. Homodimer.

It catalyses the reaction (6R)-5,10-methylene-5,6,7,8-tetrahydrofolate + NADP(+) = (6R)-5,10-methenyltetrahydrofolate + NADPH. The catalysed reaction is (6R)-5,10-methenyltetrahydrofolate + H2O = (6R)-10-formyltetrahydrofolate + H(+). It functions in the pathway one-carbon metabolism; tetrahydrofolate interconversion. Its function is as follows. Catalyzes the oxidation of 5,10-methylenetetrahydrofolate to 5,10-methenyltetrahydrofolate and then the hydrolysis of 5,10-methenyltetrahydrofolate to 10-formyltetrahydrofolate. The sequence is that of Bifunctional protein FolD from Desulfatibacillum aliphaticivorans.